The following is a 393-amino-acid chain: Lipid-A-disaccharide synthase (393 aa).

The protein belongs to the LpxB family.

The catalysed reaction is a lipid X + a UDP-2-N,3-O-bis[(3R)-3-hydroxyacyl]-alpha-D-glucosamine = a lipid A disaccharide + UDP + H(+). The protein operates within bacterial outer membrane biogenesis; LPS lipid A biosynthesis. In terms of biological role, condensation of UDP-2,3-diacylglucosamine and 2,3-diacylglucosamine-1-phosphate to form lipid A disaccharide, a precursor of lipid A, a phosphorylated glycolipid that anchors the lipopolysaccharide to the outer membrane of the cell. The sequence is that of Lipid-A-disaccharide synthase from Actinobacillus pleuropneumoniae serotype 7 (strain AP76).